A 240-amino-acid chain; its full sequence is Acyl-coenzyme A thioesterase THEM4 (240 aa).

The transit peptide at 1 to 36 directs the protein to the mitochondrion; the sequence is MLRSCAARLRTLGALCLPPVGRRLPGSEPRPELRSF. Residues Ser-37 and Ser-38 each carry the phosphoserine modification. N6-succinyllysine occurs at positions 55 and 66. Lys-74 carries the post-translational modification N6-acetyllysine. Lys-98 carries the post-translational modification N6-succinyllysine. Residue Asp-161 is the Proton donor/acceptor of the active site. Residues Asn-183, Lys-185, and 206 to 207 contribute to the substrate site; that span reads RK. Lys-207 bears the N6-succinyllysine mark.

This sequence belongs to the THEM4/THEM5 thioesterase family. Homodimer and homotetramer. Interacts with AKT1 in the cytosol. Post-translationally, phosphorylated. As to expression, expressed predominantly in skeletal muscle, testis, uterus, brain and kidney. Down-regulated in glioblastoma or glioma compared to non-neoplastic brain due to promoter hypermethylation.

It is found in the cell membrane. The protein resides in the cell projection. Its subcellular location is the ruffle membrane. It localises to the cytoplasm. The protein localises to the mitochondrion. It is found in the mitochondrion inner membrane. The protein resides in the mitochondrion intermembrane space. The catalysed reaction is hexadecanoyl-CoA + H2O = hexadecanoate + CoA + H(+). The enzyme catalyses octanoyl-CoA + H2O = octanoate + CoA + H(+). It carries out the reaction decanoyl-CoA + H2O = decanoate + CoA + H(+). It catalyses the reaction dodecanoyl-CoA + H2O = dodecanoate + CoA + H(+). The catalysed reaction is tetradecanoyl-CoA + H2O = tetradecanoate + CoA + H(+). The enzyme catalyses (9Z)-octadecenoyl-CoA + H2O = (9Z)-octadecenoate + CoA + H(+). It carries out the reaction (5Z,8Z,11Z,14Z)-eicosatetraenoyl-CoA + H2O = (5Z,8Z,11Z,14Z)-eicosatetraenoate + CoA + H(+). In terms of biological role, has acyl-CoA thioesterase activity towards medium and long-chain (C14 to C18) fatty acyl-CoA substrates, and probably plays a role in mitochondrial fatty acid metabolism. Plays a role in the apoptotic process, possibly via its regulation of AKT1 activity. According to PubMed:11598301, inhibits AKT1 phosphorylation and activity. According to PubMed:17615157, enhances AKT1 activity by favoring its phosphorylation and translocation to plasma membrane. In Homo sapiens (Human), this protein is Acyl-coenzyme A thioesterase THEM4 (THEM4).